Here is a 389-residue protein sequence, read N- to C-terminus: 1-acyl-sn-glycerol-3-phosphate acyltransferase 2 (389 aa).

A helical transmembrane segment spans residues 2–22 (VIAAAVIVPLGLLFFISGLAV). Residues 91–96 (HRSDID) carry the HXXXXD motif motif. 2 helical membrane-spanning segments follow: residues 305-325 (LAVV…FLHW) and 333-353 (KGIT…QILI). The tract at residues 357–389 (QSERSTPAKVVPAKPKDNHHPESSSQTETEKEK) is disordered. A compositionally biased stretch (basic and acidic residues) spans 370–389 (KPKDNHHPESSSQTETEKEK).

This sequence belongs to the 1-acyl-sn-glycerol-3-phosphate acyltransferase family. As to quaternary structure, interacts with GPAT9 and DGAT1. Present in roots, leaves, stems, floral buds and siliques (at protein level). Widely expressed. In contrast to LPAT1, it is not expressed at higher level in leaves.

Its subcellular location is the endoplasmic reticulum membrane. It catalyses the reaction a 1-acyl-sn-glycero-3-phosphate + an acyl-CoA = a 1,2-diacyl-sn-glycero-3-phosphate + CoA. Its pathway is phospholipid metabolism; CDP-diacylglycerol biosynthesis; CDP-diacylglycerol from sn-glycerol 3-phosphate: step 2/3. In terms of biological role, converts lysophosphatidic acid (LPA) into phosphatidic acid by incorporating acyl moiety at the 2 position. Has preference for C-18-CoA substrates compared to C-16-CoA substrates. Required for female but not male gametophyte development. The chain is 1-acyl-sn-glycerol-3-phosphate acyltransferase 2 (LPAT2) from Arabidopsis thaliana (Mouse-ear cress).